The primary structure comprises 223 residues: MDHSQCLVTIYAAAVLLGLRLQQGSCQHYLHIRPAPSDNLPLVDLIEHPDPIFDPKEKDLNETLLRSLMGGHFDPNFMAMSLPEDRLGVDDLAELDLLLRQRPSGAMPGEIKGLEFYDGLQPGKKHRLSKKLRRKLQMWLWSQTFCPVLYTWNDLGSRFWPRYVKVGSCYSKRSCSVPEGMVCKPAKSVHLTILRWRCQRRGGQRCTWIPIQYPIIAECKCSC.

The N-terminal stretch at 1–26 (MDHSQCLVTIYAAAVLLGLRLQQGSC) is a signal peptide. The N-linked (GlcNAc...) asparagine glycan is linked to Asn-61. 4 disulfide bridges follow: Cys-146–Cys-183, Cys-169–Cys-219, Cys-175–Cys-221, and Cys-198–Cys-206.

Belongs to the noggin family. In terms of assembly, homodimer.

It is found in the secreted. Functionally, inhibitor of bone morphogenetic proteins (BMP) signaling. Controls somitogenesis by sequestering the BMP-4 activity which in turn differentiates distinct subtypes of the mesoderm along the mediolateral axis. This is Noggin (NOG) from Gallus gallus (Chicken).